Consider the following 342-residue polypeptide: Probable alcohol acetyltransferase (342 aa).

The N-terminal 38 residues, 1–38 (MMILGKAGILAQYGTIYVRQNTIRNNLSSCIFKQSLCA), are a transit peptide targeting the mitochondrion. The propeptide at 39–46 (FHSLAKVL) is removed in mature form. An AB hydrolase-1 domain is found at 75-326 (PPIIILHGLF…AGHWVNAEKP (252 aa)). Catalysis depends on charge relay system residues S152 and H319.

Belongs to the AB hydrolase superfamily. Post-translationally, processed by both the mitochondrial processing peptidase (MPP) and the mitochondrial octapeptidyl aminopeptidase (OCT1).

It localises to the mitochondrion. In terms of biological role, probable alcohol acetyltransferase that uses acetyl-CoA to synthesize acetate esters from various alcohols. Not involved in the synthesis of ethyl acetate. The sequence is that of Probable alcohol acetyltransferase (IMO32) from Saccharomyces cerevisiae (strain ATCC 204508 / S288c) (Baker's yeast).